We begin with the raw amino-acid sequence, 631 residues long: Biotin--protein ligase (631 aa).

The 213-residue stretch at 341-553 (ELYAKLINGC…QFDRYHRLLL (213 aa)) folds into the BPL/LPL catalytic domain.

This sequence belongs to the biotin--protein ligase family. Monomer.

Its subcellular location is the cytoplasm. The enzyme catalyses apo-[methylmalonyl-CoA:pyruvate carboxytransferase] + biotin + ATP = holo-[methylmalonyl-CoA:pyruvate carboxytransferase] + AMP + diphosphate + H(+). It catalyses the reaction apo-[propionyl-CoA:carbon-dioxide ligase (ADP-forming)] + biotin + ATP = holo-[propionyl-CoA:carbon-dioxide ligase (ADP-forming)] + AMP + diphosphate + H(+). It carries out the reaction apo-[3-methylcrotonoyl-CoA:carbon-dioxide ligase (ADP-forming)] + biotin + ATP = holo-[3-methylcrotonoyl-CoA:carbon-dioxide ligase (ADP-forming)] + AMP + diphosphate + H(+). The catalysed reaction is biotin + L-lysyl-[protein] + ATP = N(6)-biotinyl-L-lysyl-[protein] + AMP + diphosphate + H(+). In terms of biological role, post-translational modification of specific protein by attachment of biotin. Acts on various carboxylases such as acetyl-CoA-carboxylase, pyruvate carboxylase, propionyl CoA carboxylase, and 3-methylcrotonyl CoA carboxylase. This Schizosaccharomyces pombe (strain 972 / ATCC 24843) (Fission yeast) protein is Biotin--protein ligase (bpl1).